Here is a 434-residue protein sequence, read N- to C-terminus: Enolase (434 aa).

Substrate contacts are provided by His-158 and Glu-167. The active-site Proton donor is the Glu-210. Residues Asp-245, Glu-294, and Asp-319 each contribute to the Mg(2+) site. 2 residues coordinate substrate: Glu-294 and Asp-319. Lys-344 acts as the Proton acceptor in catalysis. Substrate contacts are provided by residues 371-374 and Lys-395; that span reads SHRS.

Belongs to the enolase family. Homodimer. Mg(2+) serves as cofactor.

The protein localises to the cytoplasm. The catalysed reaction is (2R)-2-phosphoglycerate = phosphoenolpyruvate + H2O. It functions in the pathway carbohydrate degradation; glycolysis; pyruvate from D-glyceraldehyde 3-phosphate: step 4/5. This chain is Enolase, found in Caenorhabditis elegans.